The sequence spans 303 residues: Zinc transporter ZIP9-A (303 aa).

The chain crosses the membrane as a helical span at residues I7–A27. N29 carries N-linked (GlcNAc...) asparagine glycosylation. Helical transmembrane passes span L35–I55, A102–G122, I142–A162, L172–F192, and H206–S226. N237 carries an N-linked (GlcNAc...) asparagine glycan. 2 consecutive transmembrane segments (helical) span residues G240 to P260 and L282 to Q302.

Belongs to the ZIP transporter (TC 2.A.5) family.

The protein resides in the golgi apparatus. Its subcellular location is the trans-Golgi network membrane. It is found in the cell membrane. The protein localises to the cytoplasm. It localises to the perinuclear region. The protein resides in the mitochondrion. Its subcellular location is the nucleus. It catalyses the reaction Zn(2+)(in) = Zn(2+)(out). Its function is as follows. Transports zinc ions across cell and organelle membranes into the cytoplasm and regulates intracellular zinc homeostasis. Participates in the zinc ions efflux out of the secretory compartments. Regulates intracellular zinc level, resulting in the enhancement of AKT1 and MAPK3/MAPK1 (Erk1/2) phosphorylation in response to the BCR activation. Also functions as a membrane androgen receptor that mediates, through a G protein, the non-classical androgen signaling pathway, characterized by the activation of MAPK3/MAPK1 (Erk1/2) and transcription factors CREB1 or ATF1. Moreover, has dual functions as a membrane-bound androgen receptor and as an androgen-dependent zinc transporter both of which are mediated through an inhibitory G protein (Gi) that mediates both MAP kinase and zinc signaling leading to the androgen-dependent apoptotic process. This chain is Zinc transporter ZIP9-A (slc39a9-a), found in Xenopus laevis (African clawed frog).